Reading from the N-terminus, the 1029-residue chain is Kinesin-like protein KIF17 (1029 aa).

A Kinesin motor domain is found at 5–335; it reads AVKVVVRCRP…LRYANRAKNI (331 aa). 91-98 is an ATP binding site; the sequence is GQTGSGKS. Positions 346–462 form a coiled coil; sequence KDALLREYQE…EENLRKETEA (117 aa). Disordered stretches follow at residues 523 to 569 and 647 to 673; these read ELPK…MPTE and VPAP…PPRP. The segment covering 532–551 has biased composition (low complexity); it reads SEISLGSSESSSLEETSVSE. Basic and acidic residues predominate over residues 657-673; it reads SDARPEAEAADDFPPRP. A coiled-coil region spans residues 739 to 846; it reads QQVLARLQLL…QLEKIDYLAT (108 aa). Disordered stretches follow at residues 908–931 and 968–1029; these read AVST…EPNM and KSLT…SEPL.

Belongs to the TRAFAC class myosin-kinesin ATPase superfamily. Kinesin family. In terms of assembly, homodimer. Interacts with APBA1 (via PDZ domain); the interaction is direct and is required for association of KIF17 with the cargo that is to be transported. Interacts with IFT B complex components IFT52 and IFT57. Interacts with IFT70B. Interacts with PIWIL1. Interacts with TBATA.

The protein resides in the cytoplasm. It localises to the cytoskeleton. It is found in the cell projection. The protein localises to the cilium. Its subcellular location is the dendrite. Functionally, dendrite-specific motor protein which, in association with the Apba1-containing complex (LIN-10-LIN-2-LIN-7 complex), transports vesicles containing N-methyl-D-aspartate (NMDA) receptor subunit NR2B along microtubules. The sequence is that of Kinesin-like protein KIF17 (KIF17) from Homo sapiens (Human).